A 487-amino-acid polypeptide reads, in one-letter code: 3-octaprenyl-4-hydroxybenzoate carboxy-lyase (487 aa).

Residue Asn-172 coordinates Mn(2+). Residues 175–177 (IYR), 189–191 (RWL), and 194–195 (RG) each bind prenylated FMN. Position 238 (Glu-238) interacts with Mn(2+). The active-site Proton donor is the Asp-287.

The protein belongs to the UbiD family. In terms of assembly, homohexamer. Prenylated FMN serves as cofactor. Requires Mn(2+) as cofactor.

It localises to the cell membrane. The enzyme catalyses a 4-hydroxy-3-(all-trans-polyprenyl)benzoate + H(+) = a 2-(all-trans-polyprenyl)phenol + CO2. Its pathway is cofactor biosynthesis; ubiquinone biosynthesis. In terms of biological role, catalyzes the decarboxylation of 3-octaprenyl-4-hydroxy benzoate to 2-octaprenylphenol, an intermediate step in ubiquinone biosynthesis. This Actinobacillus pleuropneumoniae serotype 7 (strain AP76) protein is 3-octaprenyl-4-hydroxybenzoate carboxy-lyase.